We begin with the raw amino-acid sequence, 362 residues long: 2-aminoethylphosphonate--pyruvate transaminase (362 aa).

An N6-(pyridoxal phosphate)lysine modification is found at Lys193.

The protein belongs to the class-V pyridoxal-phosphate-dependent aminotransferase family. PhnW subfamily. Homodimer. It depends on pyridoxal 5'-phosphate as a cofactor.

It carries out the reaction (2-aminoethyl)phosphonate + pyruvate = phosphonoacetaldehyde + L-alanine. Its function is as follows. Involved in phosphonate degradation. In Bacteroides fragilis (strain YCH46), this protein is 2-aminoethylphosphonate--pyruvate transaminase.